Here is a 1185-residue protein sequence, read N- to C-terminus: Chromosome partition protein Smc (1185 aa).

32 to 39 (PNGSGKSN) contacts ATP. A coiled-coil region spans residues 167–494 (ISKYKSRKMD…KLNEKNSHLS (328 aa)). Residues 521–639 (TGIIGVVADQ…TDLKSAIEIA (119 aa)) form the SMC hinge domain. A coiled-coil region spans residues 677–1031 (RSRKIEDLKK…KVIQEIEETM (355 aa)).

The protein belongs to the SMC family. In terms of assembly, homodimer.

The protein localises to the cytoplasm. Functionally, required for chromosome condensation and partitioning. In Halothermothrix orenii (strain H 168 / OCM 544 / DSM 9562), this protein is Chromosome partition protein Smc.